We begin with the raw amino-acid sequence, 417 residues long: C6 finger transcription factor traC (417 aa).

The disordered stretch occupies residues 1–40 (MNFSEQFTGRSEPGRKANRTSNNNTNSTTNVATVTTDDSN). Residues 19 to 37 (RTSNNNTNSTTNVATVTTD) show a composition bias toward low complexity. Residues 44-73 (CDRCKGQKLRCIWENGSNTCRRCTRARAVC) constitute a DNA-binding region (zn(2)-C6 fungal-type). 2 disordered regions span residues 75–94 (QPRP…KHHV) and 104–128 (WVSS…DDHD). Positions 80–94 (PFGRPRCSTKSKHHV) are enriched in basic residues. The segment covering 104–114 (WVSSTTQQPQE) has biased composition (polar residues).

It is found in the nucleus. In terms of biological role, C6 finger transcription factor; part of the tra gene cluster that produces terrestric acid. The clavatol biosynthesis cluster cla and the terrestric acid cluster tra are both involved in the production of peniphenones and penilactones. The protein is C6 finger transcription factor traC of Penicillium crustosum (Blue mold fungus).